Consider the following 701-residue polypeptide: Elongation factor G (701 aa).

Positions 8 to 291 (GRYRNIGIVA…AVIDYLPAPT (284 aa)) constitute a tr-type G domain. GTP is bound by residues 17–24 (AHVDAGKT), 89–93 (DTPGH), and 143–146 (NKMD).

Belongs to the TRAFAC class translation factor GTPase superfamily. Classic translation factor GTPase family. EF-G/EF-2 subfamily.

The protein localises to the cytoplasm. Catalyzes the GTP-dependent ribosomal translocation step during translation elongation. During this step, the ribosome changes from the pre-translocational (PRE) to the post-translocational (POST) state as the newly formed A-site-bound peptidyl-tRNA and P-site-bound deacylated tRNA move to the P and E sites, respectively. Catalyzes the coordinated movement of the two tRNA molecules, the mRNA and conformational changes in the ribosome. This chain is Elongation factor G, found in Pseudomonas savastanoi pv. phaseolicola (strain 1448A / Race 6) (Pseudomonas syringae pv. phaseolicola (strain 1448A / Race 6)).